The primary structure comprises 267 residues: Glutamate 5-kinase (267 aa).

K18 lines the ATP pocket. 3 residues coordinate substrate: S58, D145, and N157. ATP is bound by residues 177–178 (SD) and 219–225 (TGGMATK).

It belongs to the glutamate 5-kinase family.

The protein localises to the cytoplasm. It catalyses the reaction L-glutamate + ATP = L-glutamyl 5-phosphate + ADP. The protein operates within amino-acid biosynthesis; L-proline biosynthesis; L-glutamate 5-semialdehyde from L-glutamate: step 1/2. Its function is as follows. Catalyzes the transfer of a phosphate group to glutamate to form L-glutamate 5-phosphate. The sequence is that of Glutamate 5-kinase from Clostridium tetani (strain Massachusetts / E88).